Consider the following 272-residue polypeptide: Pyridoxal phosphate phosphatase YbhA (272 aa).

Asp-9 serves as the catalytic Nucleophile. Position 9 (Asp-9) interacts with Mg(2+). Leu-10 contributes to the phosphate binding site. Asp-11 serves as a coordination point for Mg(2+). Phosphate is bound by residues 43–44 (TG) and Lys-200. Residue Asp-223 coordinates Mg(2+). Residue Asn-226 participates in phosphate binding.

The protein belongs to the HAD-like hydrolase superfamily. CbbY/CbbZ/Gph/YieH family. It depends on Mg(2+) as a cofactor. Mn(2+) serves as cofactor. The cofactor is Co(2+). Zn(2+) is required as a cofactor.

The enzyme catalyses pyridoxal 5'-phosphate + H2O = pyridoxal + phosphate. Catalyzes the dephosphorylation of pyridoxal-phosphate (PLP). Can also hydrolyze erythrose-4-phosphate (Ery4P) and fructose-1,6-bis-phosphate (Fru1,6bisP). In Escherichia coli (strain K12), this protein is Pyridoxal phosphate phosphatase YbhA (ybhA).